The following is a 290-amino-acid chain: ATP synthase gamma chain (290 aa).

It belongs to the ATPase gamma chain family. F-type ATPases have 2 components, CF(1) - the catalytic core - and CF(0) - the membrane proton channel. CF(1) has five subunits: alpha(3), beta(3), gamma(1), delta(1), epsilon(1). CF(0) has three main subunits: a, b and c.

The protein resides in the cell membrane. Produces ATP from ADP in the presence of a proton gradient across the membrane. The gamma chain is believed to be important in regulating ATPase activity and the flow of protons through the CF(0) complex. The sequence is that of ATP synthase gamma chain from Buchnera aphidicola subsp. Diuraphis noxia.